Here is a 394-residue protein sequence, read N- to C-terminus: G2/mitotic-specific cyclin-B (394 aa).

Residues 360 to 394 (QSHPSPNSRLDQEEDMASSKFMSDQQATQELKSIR) are disordered. Over residues 379–394 (KFMSDQQATQELKSIR) the composition is skewed to polar residues.

This sequence belongs to the cyclin family. Cyclin AB subfamily. Interacts with the CDK1 protein kinase to form a serine/threonine kinase holoenzyme complex also known as maturation promoting factor (MPF). The cyclin subunit imparts substrate specificity to the complex.

Essential for the control of the cell cycle at the G2/M (mitosis) transition. This chain is G2/mitotic-specific cyclin-B, found in Patiria pectinifera (Starfish).